We begin with the raw amino-acid sequence, 275 residues long: Ribosomal RNA small subunit methyltransferase A (275 aa).

Residues Asn28, Leu30, Gly55, Glu77, Asp103, and Asn123 each coordinate S-adenosyl-L-methionine.

The protein belongs to the class I-like SAM-binding methyltransferase superfamily. rRNA adenine N(6)-methyltransferase family. RsmA subfamily.

The protein localises to the cytoplasm. The enzyme catalyses adenosine(1518)/adenosine(1519) in 16S rRNA + 4 S-adenosyl-L-methionine = N(6)-dimethyladenosine(1518)/N(6)-dimethyladenosine(1519) in 16S rRNA + 4 S-adenosyl-L-homocysteine + 4 H(+). Its function is as follows. Specifically dimethylates two adjacent adenosines (A1518 and A1519) in the loop of a conserved hairpin near the 3'-end of 16S rRNA in the 30S particle. May play a critical role in biogenesis of 30S subunits. The sequence is that of Ribosomal RNA small subunit methyltransferase A from Rhizobium johnstonii (strain DSM 114642 / LMG 32736 / 3841) (Rhizobium leguminosarum bv. viciae).